Here is a 401-residue protein sequence, read N- to C-terminus: DNA damage checkpoint control protein RAD17 (401 aa).

Residues K367–P393 form a disordered region. Residues L371–P393 are compositionally biased toward basic and acidic residues. Residue S383 is modified to Phosphoserine.

The protein belongs to the rad1 family. Component of the checkpoint clamp complex composed of DDC1, MEC3 and RAD17. The interaction with MEC3 is performed in a RAD17-dependent manner. The checkpoint clamp complex loads onto DNA. Interacts with the DNA polymerase zeta subunit REV7. 2 RAD17 subunits also form a heterotrimer with one MEC3 subunit.

It is found in the nucleus. Component of the checkpoint clamp complex involved in the surveillance mechanism that allows the DNA repair pathways to act to restore the integrity of the DNA prior to DNA synthesis or separation of the replicated chromosomes. Associates with sites of DNA damage and modulates the MEC1 signaling pathway and the activation of RAD53 in response to DNA damage at phase G1. The complex also physically regulates DNA polymerase zeta-dependent mutagenesis by controlling the access of polymerase zeta to damaged DNA. Contrary to its human counterpart, the 9-1-1 complex, the checkpoint clamp complex shows no detectable exonuclease activity. This Saccharomyces cerevisiae (strain ATCC 204508 / S288c) (Baker's yeast) protein is DNA damage checkpoint control protein RAD17 (RAD17).